The primary structure comprises 236 residues: Phosphoribosylaminoimidazole-succinocarboxamide synthase (236 aa).

This sequence belongs to the SAICAR synthetase family.

It catalyses the reaction 5-amino-1-(5-phospho-D-ribosyl)imidazole-4-carboxylate + L-aspartate + ATP = (2S)-2-[5-amino-1-(5-phospho-beta-D-ribosyl)imidazole-4-carboxamido]succinate + ADP + phosphate + 2 H(+). Its pathway is purine metabolism; IMP biosynthesis via de novo pathway; 5-amino-1-(5-phospho-D-ribosyl)imidazole-4-carboxamide from 5-amino-1-(5-phospho-D-ribosyl)imidazole-4-carboxylate: step 1/2. The sequence is that of Phosphoribosylaminoimidazole-succinocarboxamide synthase from Akkermansia muciniphila (strain ATCC BAA-835 / DSM 22959 / JCM 33894 / BCRC 81048 / CCUG 64013 / CIP 107961 / Muc).